Reading from the N-terminus, the 397-residue chain is Multidrug resistance protein MdtH (397 aa).

A run of 11 helical transmembrane segments spans residues 11 to 31 (WFLALDSLLVILGFFVVMPMI), 32 to 52 (SLRFVDQLGWAAGVVGLALGL), 71 to 91 (FGARPLIVGGMLLRAAGFASL), 94 to 114 (AQSGLELILSCVISGLGGCLF), 137 to 157 (LLMMLESAGAVVGALLGSWLL), 163 to 183 (YVCLLGAGLFVCAALCNLLIL), 211 to 231 (LVLILSGYYALWVQVMLIFPI), 242 to 262 (AVGWMYTLETAISLALLYPLA), 291 to 311 (FANTLPAVFMLLACFYLGIVI), 340 to 360 (LALGGMTGYVGGGALHDYAML), and 366 to 386 (LPWLVLGTVGVTTLLLLVNCF).

Belongs to the major facilitator superfamily. DHA1 family. MdtH (TC 2.A.1.2.21) subfamily.

The protein resides in the cell inner membrane. This is Multidrug resistance protein MdtH from Aeromonas hydrophila subsp. hydrophila (strain ATCC 7966 / DSM 30187 / BCRC 13018 / CCUG 14551 / JCM 1027 / KCTC 2358 / NCIMB 9240 / NCTC 8049).